A 317-amino-acid chain; its full sequence is Small ribosomal subunit protein uS2 (317 aa).

Disordered stretches follow at residues 1 to 30 (MENE…ASKE) and 293 to 317 (RSFE…EVAE). Positions 18–30 (MAEKADDSKASKE) are enriched in basic and acidic residues. Residues 308 to 317 (KTTTSTEVAE) show a composition bias toward low complexity.

The protein belongs to the universal ribosomal protein uS2 family.

The polypeptide is Small ribosomal subunit protein uS2 (Mycoplasmopsis agalactiae (strain NCTC 10123 / CIP 59.7 / PG2) (Mycoplasma agalactiae)).